The chain runs to 116 residues: Nucleoid-associated protein P9301_00191 (116 aa).

The protein belongs to the YbaB/EbfC family. Homodimer.

The protein localises to the cytoplasm. It is found in the nucleoid. In terms of biological role, binds to DNA and alters its conformation. May be involved in regulation of gene expression, nucleoid organization and DNA protection. The sequence is that of Nucleoid-associated protein P9301_00191 from Prochlorococcus marinus (strain MIT 9301).